The primary structure comprises 87 residues: UPF0367 protein Syncc9902_0316 (87 aa).

The protein belongs to the UPF0367 family.

In Synechococcus sp. (strain CC9902), this protein is UPF0367 protein Syncc9902_0316.